The sequence spans 397 residues: Cysteine desulfurase IscS (397 aa).

Pyridoxal 5'-phosphate is bound by residues 72-73 (GS), N152, Q180, and 200-202 (SAH). An N6-(pyridoxal phosphate)lysine modification is found at K203. Pyridoxal 5'-phosphate is bound at residue T238. The Cysteine persulfide intermediate role is filled by C328. Position 328 (C328) interacts with [2Fe-2S] cluster.

Belongs to the class-V pyridoxal-phosphate-dependent aminotransferase family. NifS/IscS subfamily. In terms of assembly, homodimer. Forms a heterotetramer with IscU, interacts with other sulfur acceptors. The cofactor is pyridoxal 5'-phosphate.

The protein resides in the cytoplasm. The catalysed reaction is (sulfur carrier)-H + L-cysteine = (sulfur carrier)-SH + L-alanine. Its pathway is cofactor biosynthesis; iron-sulfur cluster biosynthesis. In terms of biological role, master enzyme that delivers sulfur to a number of partners involved in Fe-S cluster assembly, tRNA modification or cofactor biosynthesis. Catalyzes the removal of elemental sulfur atoms from cysteine to produce alanine. Functions as a sulfur delivery protein for Fe-S cluster synthesis onto IscU, an Fe-S scaffold assembly protein, as well as other S acceptor proteins. This is Cysteine desulfurase IscS from Clostridium botulinum (strain Kyoto / Type A2).